A 254-amino-acid chain; its full sequence is HLA class II histocompatibility antigen, DR alpha chain (254 aa).

The N-terminal stretch at 1–25 (MAISGVPVLGFFIIAVLMSAQESWA) is a signal peptide. Residues 26 to 109 (IKEEHVIIQA…KRSNYTPITN (84 aa)) are alpha-1. Residues 26–216 (IKEEHVIIQA…APSPLPETTE (191 aa)) are Extracellular-facing. Asparagine 103 and asparagine 143 each carry an N-linked (GlcNAc...) asparagine glycan. An alpha-2 region spans residues 110 to 203 (VPPEVTVLTN…GLDEPLLKHW (94 aa)). Residues 112-204 (PEVTVLTNSP…LDEPLLKHWE (93 aa)) enclose the Ig-like C1-type domain. Cysteine 132 and cysteine 188 are joined by a disulfide. The tract at residues 204-216 (EFDAPSPLPETTE) is connecting peptide. Residues 217-239 (NVVCALGLTVGLVGIIIGTIFII) traverse the membrane as a helical segment. At 240–254 (KGLRKSNAAERRGPL) the chain is on the cytoplasmic side. Residue lysine 244 forms a Glycyl lysine isopeptide (Lys-Gly) (interchain with G-Cter in ubiquitin) linkage.

It belongs to the MHC class II family. As to quaternary structure, heterotrimer that consists of an alpha chain HLA-DRA, a beta chain HLA-DRB and a peptide (peptide-MHCII). Newly synthesized alpha and beta chains forms a heterodimer (MHCII) that associates with the CD74/invariant chain (Ii) in the endoplasmic reticulum (ER). Ii is a trimer composed of three subunits and each subunit interacts with one MHCII dimer, blocking the peptide-binding cleft. As a result, MHCII molecules cannot bind peptides present in the ER. The complex of MHCII and CD74/Ii is transported in vesicles from ER to Golgi to lysosomes, where it encounters antigenic peptides generated via proteolysis of endocytosed antigens. MHCII dimers are dissociated from CD74/Ii by the combined action of proteolysis and HLA-DM. Lysosomal enzymes such as cathepsin, degrade CD74/Ii leaving a 24 amino acid remnant called class II-associated Ii or CLIP. Interacts (via the peptide binding cleft) with CLIP; this interaction inhibits antigen peptide binding before entry in the endosomal compartment. The displacement of CLIP and replacement by a high affinity peptide in lysosomes is performed by HLA-DM heterodimer. HLA-DM catalyzes CLIP dissociation from MHCII, stabilizes empty MHCII and mediates the selection of high affinity peptides. Interacts with HLA-DM heterodimer; this interaction is direct. Interacts (via alpha-1 domain) with TCR (via CDRs). Interacts (via alpha-2 domain) with CD4 (via Ig-like V-type domain); this interaction increases the affinity of TCR for peptide-MHCII. In terms of assembly, (Microbial infection) Interacts with Epstein-Barr virus BZLF2/gp42. (Microbial infection) Interacts with Staphylococcus aureus enterotoxin A/entA, enterotoxin B/entB, enterotoxin C1/entC1, enterotoxin D/entD, and enterotoxin H/entH. Ubiquitinated by MARCHF1 or MARCHF8 at Lys-244 leading to down-regulation of MHCII. When associated with ubiquitination of the beta chain at 'Lys-254', the down-regulation of MHCII may be highly effective. Expressed in professional APCs: macrophages, dendritic cells and B cells (at protein level). Expressed in thymic epithelial cells (at protein level).

Its subcellular location is the cell membrane. It is found in the endoplasmic reticulum membrane. It localises to the early endosome membrane. The protein resides in the late endosome membrane. The protein localises to the lysosome membrane. Its subcellular location is the autolysosome membrane. An alpha chain of antigen-presenting major histocompatibility complex class II (MHCII) molecule. In complex with the beta chain HLA-DRB, displays antigenic peptides on professional antigen presenting cells (APCs) for recognition by alpha-beta T cell receptor (TCR) on HLA-DR-restricted CD4-positive T cells. This guides antigen-specific T-helper effector functions, both antibody-mediated immune response and macrophage activation, to ultimately eliminate the infectious agents and transformed cells. Typically presents extracellular peptide antigens of 10 to 30 amino acids that arise from proteolysis of endocytosed antigens in lysosomes. In the tumor microenvironment, presents antigenic peptides that are primarily generated in tumor-resident APCs likely via phagocytosis of apoptotic tumor cells or macropinocytosis of secreted tumor proteins. Presents peptides derived from intracellular proteins that are trapped in autolysosomes after macroautophagy, a mechanism especially relevant for T cell selection in the thymus and central immune tolerance. The selection of the immunodominant epitopes follows two processing modes: 'bind first, cut/trim later' for pathogen-derived antigenic peptides and 'cut first, bind later' for autoantigens/self-peptides. The anchor residue at position 1 of the peptide N-terminus, usually a large hydrophobic residue, is essential for high affinity interaction with MHCII molecules. The chain is HLA class II histocompatibility antigen, DR alpha chain (HLA-DRA) from Homo sapiens (Human).